Reading from the N-terminus, the 247-residue chain is tRNA (guanine-N(7)-)-methyltransferase (247 aa).

S-adenosyl-L-methionine is bound by residues glycine 70, 93-94 (EI), 128-129 (NA), and leucine 148. Aspartate 151 is an active-site residue. An S-adenosyl-L-methionine-binding site is contributed by 226–228 (SEE).

This sequence belongs to the class I-like SAM-binding methyltransferase superfamily. TrmB family.

The protein resides in the nucleus. The catalysed reaction is guanosine(46) in tRNA + S-adenosyl-L-methionine = N(7)-methylguanosine(46) in tRNA + S-adenosyl-L-homocysteine. The protein operates within tRNA modification; N(7)-methylguanine-tRNA biosynthesis. Functionally, catalyzes the formation of N(7)-methylguanine at position 46 (m7G46) in tRNA. The sequence is that of tRNA (guanine-N(7)-)-methyltransferase from Drosophila persimilis (Fruit fly).